A 256-amino-acid chain; its full sequence is Leucyl/phenylalanyl-tRNA--protein transferase (256 aa).

The disordered stretch occupies residues methionine 1–leucine 21.

Belongs to the L/F-transferase family.

The protein resides in the cytoplasm. It carries out the reaction N-terminal L-lysyl-[protein] + L-leucyl-tRNA(Leu) = N-terminal L-leucyl-L-lysyl-[protein] + tRNA(Leu) + H(+). It catalyses the reaction N-terminal L-arginyl-[protein] + L-leucyl-tRNA(Leu) = N-terminal L-leucyl-L-arginyl-[protein] + tRNA(Leu) + H(+). The catalysed reaction is L-phenylalanyl-tRNA(Phe) + an N-terminal L-alpha-aminoacyl-[protein] = an N-terminal L-phenylalanyl-L-alpha-aminoacyl-[protein] + tRNA(Phe). In terms of biological role, functions in the N-end rule pathway of protein degradation where it conjugates Leu, Phe and, less efficiently, Met from aminoacyl-tRNAs to the N-termini of proteins containing an N-terminal arginine or lysine. The chain is Leucyl/phenylalanyl-tRNA--protein transferase from Leptothrix cholodnii (strain ATCC 51168 / LMG 8142 / SP-6) (Leptothrix discophora (strain SP-6)).